The primary structure comprises 156 residues: Lipoprotein signal peptidase (156 aa).

The chain crosses the membrane as a helical span at residues 62–82 (GNTVFMVLSAVIIAILSYTKI). Residues Asp-115 and Asp-133 contribute to the active site. Residues 126–146 (WPAFNLADLTITCGVIVFLAM) traverse the membrane as a helical segment.

This sequence belongs to the peptidase A8 family.

It is found in the cell inner membrane. The catalysed reaction is Release of signal peptides from bacterial membrane prolipoproteins. Hydrolyzes -Xaa-Yaa-Zaa-|-(S,diacylglyceryl)Cys-, in which Xaa is hydrophobic (preferably Leu), and Yaa (Ala or Ser) and Zaa (Gly or Ala) have small, neutral side chains.. The protein operates within protein modification; lipoprotein biosynthesis (signal peptide cleavage). Functionally, this protein specifically catalyzes the removal of signal peptides from prolipoproteins. This chain is Lipoprotein signal peptidase, found in Anaplasma phagocytophilum (strain HZ).